The primary structure comprises 417 residues: Phosphoglycerate kinase 2 (417 aa).

Ser-4 carries the phosphoserine modification. At Lys-11 the chain carries N6-acetyllysine. Residues Val-23, Asp-24, Phe-25, Asn-26, Gln-38, and Arg-39 each coordinate (2R)-3-phosphoglycerate. An N6-acetyllysine modification is found at Lys-48. (2R)-3-phosphoglycerate is bound by residues Ser-62, His-63, Gly-65, and Arg-66. N6-acetyllysine is present on residues Lys-75, Lys-86, and Lys-97. 2 residues coordinate (2R)-3-phosphoglycerate: Leu-122 and Arg-123. Lys-131 and Lys-146 each carry N6-acetyllysine. (2R)-3-phosphoglycerate contacts are provided by His-170 and Arg-171. Tyr-196 bears the Phosphotyrosine mark. N6-acetyllysine is present on Lys-199. Gly-214 serves as a coordination point for ADP. Gly-214 provides a ligand contact to CDP. AMP is bound by residues Ala-215 and Lys-216. ATP is bound at residue Ala-215. Ala-215 provides a ligand contact to Mg(2+). Asp-219 lines the CDP pocket. Asp-219 contributes to the Mg(2+) binding site. Position 220 (Lys-220) interacts with AMP. Lys-220 provides a ligand contact to ATP. Gly-238 contacts ADP. Gly-238 contributes to the CDP binding site. Gly-239 is an AMP binding site. Gly-239 serves as a coordination point for ATP. Residues Lys-267 and Lys-291 each carry the N6-acetyllysine modification. Gly-313 contributes to the AMP binding site. Gly-313 serves as a coordination point for ATP. CDP is bound by residues Gly-338, Ile-340, and Phe-343. Residue Phe-343 participates in ADP binding. Glu-344 is an AMP binding site. Glu-344, Asp-375, and Thr-376 together coordinate ATP. Asp-375 contacts Mg(2+).

This sequence belongs to the phosphoglycerate kinase family. As to quaternary structure, monomer. Mg(2+) is required as a cofactor. In terms of tissue distribution, testis and sperm. Localized on the principle piece in the sperm (at protein level). Testis-specific.

It localises to the cytoplasm. It catalyses the reaction (2R)-3-phosphoglycerate + ATP = (2R)-3-phospho-glyceroyl phosphate + ADP. The protein operates within carbohydrate degradation; glycolysis; pyruvate from D-glyceraldehyde 3-phosphate: step 2/5. Functionally, essential for sperm motility and male fertility but is not required for the completion of spermatogenesis. The chain is Phosphoglycerate kinase 2 (Pgk2) from Mus musculus (Mouse).